The following is a 326-amino-acid chain: Ras association domain-containing protein 2 (326 aa).

The Ras-associating domain maps to 176–264 (YNHKTSVFTP…SKVFLMEKDQ (89 aa)). The SARAH domain occupies 272–319 (VAQYIKFEMPVLKSFIQKLQEEEDREVEKLMRKYTVLRLMIRQRLEEI).

As to quaternary structure, interacts directly with activated KRAS in a GTP-dependent manner. Interacts (via SARAH domain) with STK3/MST2 and STK4/MST1. In terms of processing, phosphorylated by STK3/MST2 and STK4/MST1.

The protein resides in the nucleus. It localises to the cytoplasm. Its subcellular location is the chromosome. It is found in the centromere. The protein localises to the kinetochore. Potential tumor suppressor. Acts as a KRAS-specific effector protein. May promote apoptosis and cell cycle arrest. Stabilizes STK3/MST2 by protecting it from proteasomal degradation. This is Ras association domain-containing protein 2 (Rassf2) from Mus musculus (Mouse).